The sequence spans 491 residues: Acetyl-coenzyme A carboxylase carboxyl transferase subunit beta, chloroplastic (491 aa).

One can recognise a CoA carboxyltransferase N-terminal domain in the interval L229–T491. Positions 233, 236, 252, and 255 each coordinate Zn(2+). The segment at C233–C255 adopts a C4-type zinc-finger fold.

Belongs to the AccD/PCCB family. Acetyl-CoA carboxylase is a heterohexamer composed of biotin carboxyl carrier protein, biotin carboxylase and 2 subunits each of ACCase subunit alpha and ACCase plastid-coded subunit beta (accD). Zn(2+) is required as a cofactor.

The protein resides in the plastid. It is found in the chloroplast stroma. It carries out the reaction N(6)-carboxybiotinyl-L-lysyl-[protein] + acetyl-CoA = N(6)-biotinyl-L-lysyl-[protein] + malonyl-CoA. It functions in the pathway lipid metabolism; malonyl-CoA biosynthesis; malonyl-CoA from acetyl-CoA: step 1/1. In terms of biological role, component of the acetyl coenzyme A carboxylase (ACC) complex. Biotin carboxylase (BC) catalyzes the carboxylation of biotin on its carrier protein (BCCP) and then the CO(2) group is transferred by the transcarboxylase to acetyl-CoA to form malonyl-CoA. This is Acetyl-coenzyme A carboxylase carboxyl transferase subunit beta, chloroplastic from Lemna minor (Common duckweed).